Reading from the N-terminus, the 405-residue chain is 4-hydroxy-3-methylbut-2-en-1-yl diphosphate synthase (flavodoxin) (405 aa).

[4Fe-4S] cluster-binding residues include Cys297, Cys300, Cys343, and Glu350.

The protein belongs to the IspG family. It depends on [4Fe-4S] cluster as a cofactor.

The catalysed reaction is (2E)-4-hydroxy-3-methylbut-2-enyl diphosphate + oxidized [flavodoxin] + H2O + 2 H(+) = 2-C-methyl-D-erythritol 2,4-cyclic diphosphate + reduced [flavodoxin]. It functions in the pathway isoprenoid biosynthesis; isopentenyl diphosphate biosynthesis via DXP pathway; isopentenyl diphosphate from 1-deoxy-D-xylulose 5-phosphate: step 5/6. In terms of biological role, converts 2C-methyl-D-erythritol 2,4-cyclodiphosphate (ME-2,4cPP) into 1-hydroxy-2-methyl-2-(E)-butenyl 4-diphosphate. In Francisella tularensis subsp. mediasiatica (strain FSC147), this protein is 4-hydroxy-3-methylbut-2-en-1-yl diphosphate synthase (flavodoxin).